Here is a 1045-residue protein sequence, read N- to C-terminus: MAASNWGLIMNIVNSIVGVSVLTMPFCFQQCGILLGTLLLMLCTWMAHHSCMFLVKSASVSKRRTYAGLAFHAYGKVGKMMVETSMIGLMLGTCIAFYVVIGDLGSSFFARLFGLEVSEGFRVFLLFSVSLCIVLPLSLQRNMMAFIQSFSAMALMFYTVFMFVIVLSSFKHGLFSGQWLKHVSYIRWEGVFRCIPIYGMSFACQSQVLPTYDSLDDPSVKIMSSIFALSLNVVTTFYITVGFFGYVSFPETIAGNVLVNFPSNLVTEMIRVGFMMSVAVGFPMMILPCRQALNTLLFEQQQKDGTFTAGGYMPPLRFKILTLVVVFGTMLGGILIPNVETILGLTGATMGSLICLICPALIYKKIHKKGLASQFILGVGLLILVISTYTTLTVTEEPTQIKSELLERIDLKEEKDPEQINSQKSDEKAKVEQPGDNRDKPKLPPKNPEEEQIKGPIEGPQKEKDTKKQEEVQLDRPDQGDIAVPVGEAHRHEPPIPQDEVAVDEKKDQGEREEKKESVVDINSTEKKDKQQINLEKEPEIKDQAEANKGINEPVPQKPPQEVNDPNKQQLVNPPTPRLKEQPPFKDLEGIIKDLAVPVEIKKNAEIAEEKDNNDFANPVKAIENPPIKDEKNEQIPGDPGKESHVEPKAEDNQAEAGKAELLDHAFLLQVIKEQQVQQKRLLDQQEKLLEVIKEQHMEIHQQKGDEDQQDKLEGNIADKNKEELKAEARVAQKPLEGDKLENVGEVNAKVDKPAVEEHVVVVEKEQNPALNQVVKGNVPDVKKNDHKIEAPKINVEEVKVPISAGKHKKQSVQENLIHQQDVDQGASDNYKQREKAVAANKDYVLGHIIQQETANPIDPITLPDLQDKLGKLALHQTEPKQKPVKIAGIGEKKLGAVQEEKILVQKGQEAQADKVIQDNYNPVPDHGLHENNNADAPATINVEAKKEHIEKPKDGAVLEHDEGKQNRDLKLQNDMDLRRKKRDLALVQQENNGAQIISFHPVPNLKVNDLRGALEARLNQMVDGGLQVVQSRKIKQLIDEEKNR.

10 consecutive transmembrane segments (helical) span residues 8–28 (LIMNIVNSIVGVSVLTMPFCF), 33–53 (ILLGTLLLMLCTWMAHHSCMF), 85–105 (SMIGLMLGTCIAFYVVIGDLG), 117–137 (VSEGFRVFLLFSVSLCIVLPL), 150–170 (FSAMALMFYTVFMFVIVLSSF), 226–246 (IFALSLNVVTTFYITVGFFGY), 269–289 (MIRVGFMMSVAVGFPMMILPC), 320–340 (ILTLVVVFGTMLGGILIPNVE), 342–362 (ILGLTGATMGSLICLICPALI), and 375–395 (FILGVGLLILVISTYTTLTVT). 3 stretches are compositionally biased toward basic and acidic residues: residues 412–453 (KEEK…EEQI), 460–479 (PQKEKDTKKQEEVQLDRPDQ), and 503–546 (VDEK…DQAE). 2 disordered regions span residues 412–584 (KEEK…EQPP) and 606–658 (EIAE…AEAG). Residues 564-573 (NDPNKQQLVN) are compositionally biased toward polar residues. Residues 627–658 (PIKDEKNEQIPGDPGKESHVEPKAEDNQAEAG) are compositionally biased toward basic and acidic residues.

The protein belongs to the amino acid/polyamine transporter 2 family.

It is found in the membrane. Its function is as follows. Putative sodium-dependent amino acid/proton antiporter. The polypeptide is Putative sodium-coupled neutral amino acid transporter 10 (slc38a10) (Xenopus laevis (African clawed frog)).